The chain runs to 90 residues: Long neurotoxin 1 (90 aa).

The N-terminal stretch at Met1 to Ser21 is a signal peptide. 5 disulfides stabilise this stretch: Cys24–Cys42, Cys35–Cys63, Cys48–Cys52, Cys67–Cys78, and Cys79–Cys84.

The protein belongs to the three-finger toxin family. Long-chain subfamily. Type II alpha-neurotoxin sub-subfamily. As to expression, expressed by the venom gland.

The protein resides in the secreted. Binds with high affinity to muscular (alpha-1/CHRNA1) and neuronal (alpha-7/CHRNA7) nicotinic acetylcholine receptor (nAChR) and inhibits acetylcholine from binding to the receptor, thereby impairing neuromuscular and neuronal transmission. This chain is Long neurotoxin 1, found in Austrelaps superbus (Lowland copperhead snake).